A 149-amino-acid chain; its full sequence is Endoribonuclease YbeY (149 aa).

Residues His-112, His-116, and His-122 each coordinate Zn(2+).

The protein belongs to the endoribonuclease YbeY family. It depends on Zn(2+) as a cofactor.

Its subcellular location is the cytoplasm. Single strand-specific metallo-endoribonuclease involved in late-stage 70S ribosome quality control and in maturation of the 3' terminus of the 16S rRNA. This is Endoribonuclease YbeY from Methylibium petroleiphilum (strain ATCC BAA-1232 / LMG 22953 / PM1).